The following is an 89-amino-acid chain: Small ribosomal subunit protein uS14A (89 aa).

This sequence belongs to the universal ribosomal protein uS14 family. As to quaternary structure, part of the 30S ribosomal subunit. Contacts proteins S3 and S10.

Its function is as follows. Binds 16S rRNA, required for the assembly of 30S particles and may also be responsible for determining the conformation of the 16S rRNA at the A site. This Bacillus licheniformis (strain ATCC 14580 / DSM 13 / JCM 2505 / CCUG 7422 / NBRC 12200 / NCIMB 9375 / NCTC 10341 / NRRL NRS-1264 / Gibson 46) protein is Small ribosomal subunit protein uS14A.